Consider the following 547-residue polypeptide: uncharacterized protein (547 aa).

The protein to B.pertussis prn N-terminal region.

This is an uncharacterized protein from Escherichia coli O157:H7.